The chain runs to 322 residues: Beta-1,4-galactosyltransferase 7 (322 aa).

The Cytoplasmic segment spans residues 1-9 (MVNISTINW). The helical; Signal-anchor for type II membrane protein transmembrane segment at 10-30 (VFVCGLSFCLGGIAVLSLMPL) threads the bilayer. The Lumenal portion of the chain corresponds to 31 to 322 (GSDCVCPLSN…TAAAASAVQT (292 aa)). 4 residues coordinate UDP-alpha-D-galactose: Pro-82, Arg-84, Asp-145, and Val-146. Mn(2+) is bound at residue Asp-147. UDP-alpha-D-galactose-binding residues include Tyr-177, Gly-185, Trp-207, and Gly-208. Residue Leu-209 participates in beta-D-xylose binding. Glu-210 contributes to the UDP-alpha-D-galactose binding site. Beta-D-xylose contacts are provided by Asp-211 and Asp-212. Asn-236 carries an N-linked (GlcNAc...) asparagine glycan. His-241, His-243, and Arg-250 together coordinate UDP-alpha-D-galactose. His-241 and His-243 together coordinate Mn(2+). 2 disulfides stabilise this stretch: Cys-255–Cys-310 and Cys-300–Cys-308.

It belongs to the glycosyltransferase 7 family. Requires Mn(2+) as cofactor. Expressed in male and female adults. Expressed in head.

It localises to the golgi apparatus membrane. It catalyses the reaction 3-O-(beta-D-xylosyl)-L-seryl-[protein] + UDP-alpha-D-galactose = 3-O-(beta-D-galactosyl-(1-&gt;4)-beta-D-xylosyl)-L-seryl-[protein] + UDP + H(+). The protein operates within protein modification; protein glycosylation. Functionally, transfers galactose from UDP-D-Galactose (UDP-Gal) to the acceptor xylose residue in the linkage tetrasaccharide region of the glycosaminoglycan side chain of proteoglycans. No activity towards beta-GlcNAc, beta-Glc, beta-Gal, and beta-GalNAc as acceptors. This Drosophila melanogaster (Fruit fly) protein is Beta-1,4-galactosyltransferase 7.